The following is a 513-amino-acid chain: ATP synthase subunit alpha (513 aa).

169–176 contacts ATP; the sequence is GDRQVGKT.

It belongs to the ATPase alpha/beta chains family. In terms of assembly, F-type ATPases have 2 components, CF(1) - the catalytic core - and CF(0) - the membrane proton channel. CF(1) has five subunits: alpha(3), beta(3), gamma(1), delta(1), epsilon(1). CF(0) has three main subunits: a(1), b(2) and c(9-12). The alpha and beta chains form an alternating ring which encloses part of the gamma chain. CF(1) is attached to CF(0) by a central stalk formed by the gamma and epsilon chains, while a peripheral stalk is formed by the delta and b chains.

It localises to the cell inner membrane. The enzyme catalyses ATP + H2O + 4 H(+)(in) = ADP + phosphate + 5 H(+)(out). In terms of biological role, produces ATP from ADP in the presence of a proton gradient across the membrane. The alpha chain is a regulatory subunit. This chain is ATP synthase subunit alpha, found in Aeromonas salmonicida (strain A449).